The sequence spans 71 residues: Small ribosomal subunit protein bS21B (71 aa).

The protein belongs to the bacterial ribosomal protein bS21 family.

In Rhizobium johnstonii (strain DSM 114642 / LMG 32736 / 3841) (Rhizobium leguminosarum bv. viciae), this protein is Small ribosomal subunit protein bS21B.